Consider the following 374-residue polypeptide: DNA replication and repair protein RecF (374 aa).

30–37 is an ATP binding site; the sequence is GPNAQGKS.

This sequence belongs to the RecF family.

It localises to the cytoplasm. Functionally, the RecF protein is involved in DNA metabolism; it is required for DNA replication and normal SOS inducibility. RecF binds preferentially to single-stranded, linear DNA. It also seems to bind ATP. The protein is DNA replication and repair protein RecF of Acaryochloris marina (strain MBIC 11017).